The chain runs to 339 residues: 2-oxoisovalerate dehydrogenase subunit beta (339 aa).

As to quaternary structure, heterodimer of an alpha and a beta chain. Thiamine diphosphate is required as a cofactor.

It carries out the reaction N(6)-[(R)-lipoyl]-L-lysyl-[protein] + 3-methyl-2-oxobutanoate + H(+) = N(6)-[(R)-S(8)-2-methylpropanoyldihydrolipoyl]-L-lysyl-[protein] + CO2. In terms of biological role, the branched-chain alpha-keto dehydrogenase complex catalyzes the overall conversion of alpha-keto acids to acyl-CoA and CO(2). It contains multiple copies of three enzymatic components: branched-chain alpha-keto acid decarboxylase (E1), lipoamide acyltransferase (E2) and lipoamide dehydrogenase (E3). The chain is 2-oxoisovalerate dehydrogenase subunit beta (bkdA2) from Pseudomonas putida (Arthrobacter siderocapsulatus).